We begin with the raw amino-acid sequence, 910 residues long: Aconitate hydratase A (910 aa).

3 residues coordinate [4Fe-4S] cluster: cysteine 454, cysteine 520, and cysteine 523.

This sequence belongs to the aconitase/IPM isomerase family. Monomer. [4Fe-4S] cluster is required as a cofactor.

It carries out the reaction citrate = D-threo-isocitrate. The enzyme catalyses (2S,3R)-3-hydroxybutane-1,2,3-tricarboxylate = 2-methyl-cis-aconitate + H2O. It participates in carbohydrate metabolism; tricarboxylic acid cycle; isocitrate from oxaloacetate: step 2/2. The protein operates within organic acid metabolism; propanoate degradation. In terms of biological role, involved in the catabolism of short chain fatty acids (SCFA) via the tricarboxylic acid (TCA)(acetyl degradation route) and probably the 2-methylcitrate cycle I (propionate degradation route). Catalyzes the reversible isomerization of citrate to isocitrate via cis-aconitate. Could catalyze the hydration of 2-methyl-cis-aconitate to yield (2R,3S)-2-methylisocitrate. The apo form of AcnA functions as a RNA-binding regulatory protein. In Pseudomonas aeruginosa (strain ATCC 15692 / DSM 22644 / CIP 104116 / JCM 14847 / LMG 12228 / 1C / PRS 101 / PAO1), this protein is Aconitate hydratase A (acnA).